Here is a 54-residue protein sequence, read N- to C-terminus: Sec-independent protein translocase protein TatA (54 aa).

The helical transmembrane segment at 1–21 threads the bilayer; that stretch reads MGMSFSHLLIVLLIIFVLFGA.

Belongs to the TatA/E family. In terms of assembly, the Tat system comprises two distinct complexes: a TatABC complex, containing multiple copies of TatA, TatB and TatC subunits, and a separate TatA complex, containing only TatA subunits. Substrates initially bind to the TatABC complex, which probably triggers association of the separate TatA complex to form the active translocon.

Its subcellular location is the cell inner membrane. In terms of biological role, part of the twin-arginine translocation (Tat) system that transports large folded proteins containing a characteristic twin-arginine motif in their signal peptide across membranes. TatA could form the protein-conducting channel of the Tat system. The polypeptide is Sec-independent protein translocase protein TatA (Rickettsia prowazekii (strain Madrid E)).